The chain runs to 434 residues: Anaerobic glycerol-3-phosphate dehydrogenase subunit B (434 aa).

It belongs to the anaerobic G-3-P dehydrogenase subunit B family. In terms of assembly, composed of a catalytic GlpA/B dimer and of membrane bound GlpC. FMN is required as a cofactor.

The catalysed reaction is a quinone + sn-glycerol 3-phosphate = dihydroxyacetone phosphate + a quinol. The protein operates within polyol metabolism; glycerol degradation via glycerol kinase pathway; glycerone phosphate from sn-glycerol 3-phosphate (anaerobic route): step 1/1. Functionally, conversion of glycerol 3-phosphate to dihydroxyacetone. Uses fumarate or nitrate as electron acceptor. The protein is Anaerobic glycerol-3-phosphate dehydrogenase subunit B of Histophilus somni (strain 2336) (Haemophilus somnus).